A 102-amino-acid polypeptide reads, in one-letter code: Small ribosomal subunit protein uS10 (102 aa).

It belongs to the universal ribosomal protein uS10 family. As to quaternary structure, part of the 30S ribosomal subunit.

In terms of biological role, involved in the binding of tRNA to the ribosomes. This Pelotomaculum thermopropionicum (strain DSM 13744 / JCM 10971 / SI) protein is Small ribosomal subunit protein uS10.